The chain runs to 435 residues: Trigger factor (435 aa).

One can recognise a PPIase FKBP-type domain in the interval 163-248; sequence GDRVTIDFEG…LTRIEAQNLP (86 aa).

This sequence belongs to the FKBP-type PPIase family. Tig subfamily.

The protein localises to the cytoplasm. The catalysed reaction is [protein]-peptidylproline (omega=180) = [protein]-peptidylproline (omega=0). Functionally, involved in protein export. Acts as a chaperone by maintaining the newly synthesized protein in an open conformation. Functions as a peptidyl-prolyl cis-trans isomerase. The chain is Trigger factor from Leptothrix cholodnii (strain ATCC 51168 / LMG 8142 / SP-6) (Leptothrix discophora (strain SP-6)).